A 148-amino-acid polypeptide reads, in one-letter code: Flavodoxin (148 aa).

The Flavodoxin-like domain maps to 4–145 (VLIVYGSTTG…DVSAWAGRVV (142 aa)).

This sequence belongs to the flavodoxin family. FMN is required as a cofactor.

Functionally, low-potential electron donor to a number of redox enzymes. This chain is Flavodoxin, found in Nitratidesulfovibrio vulgaris (strain DSM 19637 / Miyazaki F) (Desulfovibrio vulgaris).